The sequence spans 295 residues: Phosphatidylserine decarboxylase proenzyme (295 aa).

Residues Asp113, His169, and Ser256 each act as charge relay system; for autoendoproteolytic cleavage activity in the active site. The Schiff-base intermediate with substrate; via pyruvic acid; for decarboxylase activity role is filled by Ser256. Pyruvic acid (Ser); by autocatalysis is present on Ser256.

This sequence belongs to the phosphatidylserine decarboxylase family. PSD-B subfamily. Prokaryotic type II sub-subfamily. As to quaternary structure, heterodimer of a large membrane-associated beta subunit and a small pyruvoyl-containing alpha subunit. The cofactor is pyruvate. Is synthesized initially as an inactive proenzyme. Formation of the active enzyme involves a self-maturation process in which the active site pyruvoyl group is generated from an internal serine residue via an autocatalytic post-translational modification. Two non-identical subunits are generated from the proenzyme in this reaction, and the pyruvate is formed at the N-terminus of the alpha chain, which is derived from the carboxyl end of the proenzyme. The autoendoproteolytic cleavage occurs by a canonical serine protease mechanism, in which the side chain hydroxyl group of the serine supplies its oxygen atom to form the C-terminus of the beta chain, while the remainder of the serine residue undergoes an oxidative deamination to produce ammonia and the pyruvoyl prosthetic group on the alpha chain. During this reaction, the Ser that is part of the protease active site of the proenzyme becomes the pyruvoyl prosthetic group, which constitutes an essential element of the active site of the mature decarboxylase.

Its subcellular location is the cell membrane. The catalysed reaction is a 1,2-diacyl-sn-glycero-3-phospho-L-serine + H(+) = a 1,2-diacyl-sn-glycero-3-phosphoethanolamine + CO2. It participates in phospholipid metabolism; phosphatidylethanolamine biosynthesis; phosphatidylethanolamine from CDP-diacylglycerol: step 2/2. Functionally, catalyzes the formation of phosphatidylethanolamine (PtdEtn) from phosphatidylserine (PtdSer). The sequence is that of Phosphatidylserine decarboxylase proenzyme from Clostridium novyi (strain NT).